The chain runs to 308 residues: GTPase Era (308 aa).

Residues 14–181 (RCGFVALIGA…KQALAAMVPP (168 aa)) form the Era-type G domain. The segment at 22-29 (GAPNVGKS) is G1. 22–29 (GAPNVGKS) provides a ligand contact to GTP. A G2 region spans residues 48 to 52 (QTTRA). Residues 69 to 72 (DTPG) form a G3 region. GTP-binding positions include 69–73 (DTPGI) and 131–134 (NKVD). The tract at residues 131–134 (NKVD) is G4. Residues 160–162 (ISA) form a G5 region. Residues 212 to 289 (LHQELPYQST…HLFLFVKVRE (78 aa)) form the KH type-2 domain.

It belongs to the TRAFAC class TrmE-Era-EngA-EngB-Septin-like GTPase superfamily. Era GTPase family. Monomer.

The protein resides in the cytoplasm. It localises to the cell inner membrane. In terms of biological role, an essential GTPase that binds both GDP and GTP, with rapid nucleotide exchange. Plays a role in 16S rRNA processing and 30S ribosomal subunit biogenesis and possibly also in cell cycle regulation and energy metabolism. This chain is GTPase Era, found in Bradyrhizobium sp. (strain BTAi1 / ATCC BAA-1182).